We begin with the raw amino-acid sequence, 290 residues long: tRNA-cytidine(32) 2-sulfurtransferase (290 aa).

Residues 36 to 41 (SGGKDS) carry the PP-loop motif motif. Residues Cys111, Cys114, and Cys202 each contribute to the [4Fe-4S] cluster site. The tract at residues 259 to 290 (DPWLDAEDEEAEDCGEPAGDGVVSLGGARGGR) is disordered. Acidic residues predominate over residues 262-273 (LDAEDEEAEDCG).

The protein belongs to the TtcA family. As to quaternary structure, homodimer. Requires Mg(2+) as cofactor. It depends on [4Fe-4S] cluster as a cofactor.

It is found in the cytoplasm. The catalysed reaction is cytidine(32) in tRNA + S-sulfanyl-L-cysteinyl-[cysteine desulfurase] + AH2 + ATP = 2-thiocytidine(32) in tRNA + L-cysteinyl-[cysteine desulfurase] + A + AMP + diphosphate + H(+). It functions in the pathway tRNA modification. In terms of biological role, catalyzes the ATP-dependent 2-thiolation of cytidine in position 32 of tRNA, to form 2-thiocytidine (s(2)C32). The sulfur atoms are provided by the cysteine/cysteine desulfurase (IscS) system. The chain is tRNA-cytidine(32) 2-sulfurtransferase from Anaeromyxobacter dehalogenans (strain 2CP-C).